The following is a 429-amino-acid chain: Enolase (429 aa).

Residue Gln163 coordinates (2R)-2-phosphoglycerate. Glu205 serves as the catalytic Proton donor. Positions 242, 286, and 313 each coordinate Mg(2+). 4 residues coordinate (2R)-2-phosphoglycerate: Lys338, Arg367, Ser368, and Lys389. Catalysis depends on Lys338, which acts as the Proton acceptor.

It belongs to the enolase family. Requires Mg(2+) as cofactor.

The protein localises to the cytoplasm. It localises to the secreted. It is found in the cell surface. The catalysed reaction is (2R)-2-phosphoglycerate = phosphoenolpyruvate + H2O. The protein operates within carbohydrate degradation; glycolysis; pyruvate from D-glyceraldehyde 3-phosphate: step 4/5. Functionally, catalyzes the reversible conversion of 2-phosphoglycerate (2-PG) into phosphoenolpyruvate (PEP). It is essential for the degradation of carbohydrates via glycolysis. The chain is Enolase from Citrifermentans bemidjiense (strain ATCC BAA-1014 / DSM 16622 / JCM 12645 / Bem) (Geobacter bemidjiensis).